A 315-amino-acid chain; its full sequence is PDZ domain-containing protein GIPC2 (315 aa).

The span at 1 to 12 (MPLKLRGKKKAK) shows a compositional bias: basic residues. A disordered region spans residues 1 to 34 (MPLKLRGKKKAKSKETAGLVEGEPTGAGGGSLSA). Positions 117–197 (EVNVYKSEDS…EELFTMKLIE (81 aa)) constitute a PDZ domain.

Belongs to the GIPC family. Probably interacts with SEMA5A. Expressed at highest levels in ascending colon and at moderate levels in adult kidney. Expressed at low levels in adult pancreas and at very low levels in adult liver. Expression is down-regulated in several primary tumors, such as kidney, colon and rectal tumors.

The protein resides in the cytoplasm. This is PDZ domain-containing protein GIPC2 (GIPC2) from Homo sapiens (Human).